The sequence spans 341 residues: tRNA N6-adenosine threonylcarbamoyltransferase (341 aa).

Fe cation contacts are provided by histidine 115 and histidine 119. Residues 138-142 (VVSGG), aspartate 171, glycine 184, aspartate 188, and asparagine 279 each bind substrate. Aspartate 307 is a binding site for Fe cation.

The protein belongs to the KAE1 / TsaD family. Fe(2+) serves as cofactor.

The protein resides in the cytoplasm. The catalysed reaction is L-threonylcarbamoyladenylate + adenosine(37) in tRNA = N(6)-L-threonylcarbamoyladenosine(37) in tRNA + AMP + H(+). Its function is as follows. Required for the formation of a threonylcarbamoyl group on adenosine at position 37 (t(6)A37) in tRNAs that read codons beginning with adenine. Is involved in the transfer of the threonylcarbamoyl moiety of threonylcarbamoyl-AMP (TC-AMP) to the N6 group of A37, together with TsaE and TsaB. TsaD likely plays a direct catalytic role in this reaction. In Clostridium kluyveri (strain NBRC 12016), this protein is tRNA N6-adenosine threonylcarbamoyltransferase.